The sequence spans 237 residues: MKIFLENLYHSDCYFLPIRDNQQVLVGVELITHFSSEDGTVRIPTSRVIAQLTEEQHWQLFSEQLELLKSCQHFFIQHKLFAWLNLTPQVATLLLERDNYAGELLKYPFIELLINENYPHLNEGKDNRGLLSLSQVYPLVLGNLGAGNSTMKAVFDGLFTRVMLDKSFIQQQITHRSFEPFIRAIQAQISPCCNCIIAGGIDTAEILAQITPFDFHALQGCLWPAVPINQITTLVQR.

One can recognise an EAL domain in the interval 1-237; sequence MKIFLENLYH…INQITTLVQR (237 aa).

It belongs to the YdiV family.

Its function is as follows. Upon overexpression acts as a novel anti-FlhC(2)FlhD(4) factor, decreasing its DNA-binding activity, able to negatively regulate expression of flagellar class II operons including FliC. The chain is Putative anti-FlhC(2)FlhD(4) factor YdiV (ydiV) from Escherichia coli (strain K12).